The following is a 263-amino-acid chain: Post-GPI attachment to proteins factor 2 (263 aa).

6 helical membrane passes run 16 to 36 (FVICIGGLPSSALLICVILSL), 69 to 89 (YIWRILIGLHIGPRLVVAIAF), 109 to 129 (FLCNLACFLNLLENFFLLALT), 143 to 163 (CFGGFAICSIIYMLLSTWLFN), 180 to 200 (YKILGAAIFVLCFFLGAYLYW), and 208 to 228 (PGIYTLFALVEYSAVLSNIFF).

This sequence belongs to the PGAP2 family.

Its subcellular location is the golgi apparatus membrane. It is found in the endoplasmic reticulum membrane. Its function is as follows. Involved in the lipid remodeling steps of GPI-anchor maturation. Required for stable expression of GPI-anchored proteins at the cell surface. The chain is Post-GPI attachment to proteins factor 2 from Caenorhabditis elegans.